The sequence spans 304 residues: Calmodulin-lysine N-methyltransferase (304 aa).

The protein belongs to the class I-like SAM-binding methyltransferase superfamily. CLNMT methyltransferase family. In terms of assembly, monomer. Expressed in discreet spatial and tissue-specific patterns including root tips, leaves-tips, floral buds, stamens, hydathodes, stigma, anther, siliques, apical meristems and germinating seeds. Also observed at high levels in the root stele region.

It localises to the cytoplasm. Its subcellular location is the nucleus. The enzyme catalyses [calmodulin]-L-lysine + S-adenosyl-L-methionine = [calmodulin]-N(6)-methyl-L-lysine + S-adenosyl-L-homocysteine + H(+). Functionally, catalyzes the trimethylation of calmodulin. Regulates roots development probably by modulating auxin signaling responses. May be involved in gravitropism. Involved in abscisic acid (ABA)-mediated and abiotic stress responses, including salt (NaCl), cold, drought and heat stresses. This Arabidopsis thaliana (Mouse-ear cress) protein is Calmodulin-lysine N-methyltransferase.